A 378-amino-acid chain; its full sequence is uncharacterized protein (378 aa).

This is an uncharacterized protein from Nostoc sp. (strain PCC 7120 / SAG 25.82 / UTEX 2576).